The chain runs to 215 residues: High mobility group protein B1 (215 aa).

1–10 serves as a coordination point for heparin; it reads MGKGDPKKPR. Positions 1–97 are sufficient for interaction with HAVCR2; it reads MGKGDPKKPR…KFKDPNAPKR (97 aa). N6-acetyllysine is present on residues Lys3, Lys7, Lys8, and Lys12. The segment at 3 to 15 is LPS binding (delipidated); it reads KGDPKKPRGKMSS. The HMG box 1 DNA-binding region spans 9–79; that stretch reads PRGKMSSYAF…RYEREMKTYI (71 aa). Cys23 bears the Cysteine sulfonic acid (-SO3H); alternate mark. A disulfide bridge connects residues Cys23 and Cys45. The NLS 1 stretch occupies residues 27–43; sequence HKKKHPDASVNFSEFSK. Residues 27 to 43 carry the Nuclear localization signal (NLS) 1 motif; it reads HKKKHPDASVNFSEFSK. An N6-acetyllysine mark is found at Lys28, Lys29, and Lys30. Residue Lys28 forms an Isoglutamyl lysine isopeptide (Lys-Gln) (interchain with Q-?) linkage. Ser35 is subject to Phosphoserine. An N6-acetyllysine modification is found at Lys43. Isoglutamyl lysine isopeptide (Lys-Gln) (interchain with Q-?) cross-links involve residues Lys43 and Lys44. Cysteine sulfonic acid (-SO3H); alternate is present on Cys45. Lys68 is covalently cross-linked (Isoglutamyl lysine isopeptide (Lys-Gln) (interchain with Q-?)). Residues 76–95 form a disordered region; that stretch reads KTYIPPKGETKKKFKDPNAP. The segment at 80–96 is LPS binding (Lipid A); it reads PPKGETKKKFKDPNAPK. The segment covering 83-94 has biased composition (basic and acidic residues); that stretch reads GETKKKFKDPNA. The tract at residues 89–108 is cytokine-stimulating activity; sequence FKDPNAPKRPPSAFFLFCSE. At Lys90 the chain carries N6-acetyllysine. A DNA-binding region (HMG box 2) is located at residues 95 to 163; it reads PKRPPSAFFL…KYEKDIAAYR (69 aa). Phosphoserine is present on Ser100. A Cysteine sulfonic acid (-SO3H) modification is found at Cys106. 7 positions are modified to N6-acetyllysine: Lys127, Lys128, Lys141, Lys172, Lys173, Lys177, and Lys180. A binding to AGER/RAGE region spans residues 150–183; it reads KLKEKYEKDIAAYRAKGKPDAAKKGVVKAEKSKK. Over residues 161-179 the composition is skewed to basic and acidic residues; it reads AYRAKGKPDAAKKGVVKAE. Positions 161 to 215 are disordered; that stretch reads AYRAKGKPDAAKKGVVKAEKSKKKKEEEEDEEDEEDEEEEEDEEDEDEEEDDDDE. Residues 178-184 form an NLS 2 region; that stretch reads AEKSKKK. The Nuclear localization signal (NLS) 2 signature appears at 178 to 184; the sequence is AEKSKKK. Lys180 participates in a covalent cross-link: Isoglutamyl lysine isopeptide (Lys-Gln) (interchain with Q-?). Residue Ser181 is modified to ADP-ribosylserine. N6-acetyllysine occurs at positions 182, 183, 184, and 185. Residues Lys182, Lys183, and Lys184 each participate in an isoglutamyl lysine isopeptide (Lys-Gln) (interchain with Q-?) cross-link. The segment covering 187-215 has biased composition (acidic residues); the sequence is EEEDEEDEEDEEEEEDEEDEDEEEDDDDE.

The protein belongs to the HMGB family. In terms of assembly, interacts (fully reduced HMGB1) with CXCL12; probably in a 1:2 ratio involving two molecules of CXCL12, each interacting with one HMG box of HMGB1; inhibited by glycyrrhizin. Associates with the TLR4:LY96 receptor complex. Component of the RAG complex composed of core components RAG1 and RAG2, and associated component HMGB1 or HMGB2. Interacts (in cytoplasm upon starvation) with BECN1; inhibits the interaction of BECN1 and BCL2 leading to promotion of autophagy. Interacts with KPNA1; involved in nuclear import. Interacts with SREBF1, TLR2, TLR4, TLR9, PTPRZ1, APEX1, FEN1, POLB, TERT. Interacts with IL1B, AGER, MSH2, XPA, XPC, HNF1A, TP53. Interacts with CD24; the probable CD24:SIGLEC10 complex is proposed to inhibit HGMB1-mediated tissue damage immune response. Interacts with THBD; prevents HGMB1 interaction with ACER/RAGE and inhibits HGMB1 pro-inflammatory activity. Interacts with HAVCR2; impairs HMGB1 binding to B-DNA and likely HMGB1-mediated innate immune response. Interacts with XPO1; mediating nuclear export. Interacts with receptor RAGE/AGER. Post-translationally, phosphorylated at serine residues. Phosphorylation in both NLS regions is required for cytoplasmic translocation followed by secretion. In terms of processing, acetylated on multiple sites upon stimulation with LPS. Acetylation on lysine residues in the nuclear localization signals (NLS 1 and NLS 2) leads to cytoplasmic localization and subsequent secretion. Acetylation on Lys-3 results in preferential binding to DNA ends and impairs DNA bending activity. Reduction/oxidation of cysteine residues Cys-23, Cys-45 and Cys-106 and a possible intramolecular disulfide bond involving Cys-23 and Cys-45 give rise to different redox forms with specific functional activities in various cellular compartments: 1- fully reduced HMGB1 (HMGB1C23hC45hC106h), 2- disulfide HMGB1 (HMGB1C23-C45C106h) and 3- sulfonyl HMGB1 (HMGB1C23soC45soC106so). Post-translationally, poly-ADP-ribosylated by PARP1 when secreted following stimulation with LPS. In terms of processing, in vitro cleavage by CASP1 is liberating a HMG box 1-containing peptide which may mediate immunogenic activity; the peptide antagonizes apoptosis-induced immune tolerance. Can be proteolytically cleaved by a thrombin:thrombomodulin complex; reduces binding to heparin and pro-inflammatory activities. Forms covalent cross-links mediated by transglutaminase TGM2, between a glutamine and the epsilon-amino group of a lysine residue, forming homopolymers and heteropolymers.

Its subcellular location is the nucleus. It is found in the chromosome. It localises to the cytoplasm. The protein localises to the secreted. The protein resides in the cell membrane. Its subcellular location is the endosome. It is found in the endoplasmic reticulum-Golgi intermediate compartment. Its function is as follows. Multifunctional redox sensitive protein with various roles in different cellular compartments. In the nucleus is one of the major chromatin-associated non-histone proteins and acts as a DNA chaperone involved in replication, transcription, chromatin remodeling, V(D)J recombination, DNA repair and genome stability. Proposed to be an universal biosensor for nucleic acids. Promotes host inflammatory response to sterile and infectious signals and is involved in the coordination and integration of innate and adaptive immune responses. In the cytoplasm functions as a sensor and/or chaperone for immunogenic nucleic acids implicating the activation of TLR9-mediated immune responses, and mediates autophagy. Acts as a danger-associated molecular pattern (DAMP) molecule that amplifies immune responses during tissue injury. Released to the extracellular environment can bind DNA, nucleosomes, IL-1 beta, CXCL12, AGER isoform 2/sRAGE, lipopolysaccharide (LPS) and lipoteichoic acid (LTA), and activates cells through engagement of multiple surface receptors. In the extracellular compartment fully reduced HMGB1 (released by necrosis) acts as a chemokine, disulfide HMGB1 (actively secreted) as a cytokine, and sulfonyl HMGB1 (released from apoptotic cells) promotes immunological tolerance. Has proangiogenic activity. May be involved in platelet activation. Binds to phosphatidylserine and phosphatidylethanolamide. Bound to RAGE mediates signaling for neuronal outgrowth. May play a role in accumulation of expanded polyglutamine (polyQ) proteins. Functionally, nuclear functions are attributed to fully reduced HGMB1. Associates with chromatin and binds DNA with a preference to non-canonical DNA structures such as single-stranded DNA, DNA-containing cruciforms or bent structures, supercoiled DNA and ZDNA. Can bent DNA and enhance DNA flexibility by looping thus providing a mechanism to promote activities on various gene promoters by enhancing transcription factor binding and/or bringing distant regulatory sequences into close proximity. May be involved in nucleotide excision repair (NER), mismatch repair (MMR) and base excision repair (BER) pathways, and double strand break repair such as non-homologous end joining (NHEJ). Involved in V(D)J recombination by acting as a cofactor of the RAG complex: acts by stimulating cleavage and RAG protein binding at the 23 bp spacer of conserved recombination signal sequences (RSS). In vitro can displace histone H1 from highly bent DNA. Can restructure the canonical nucleosome leading to relaxation of structural constraints for transcription factor-binding. Enhances binding of sterol regulatory element-binding proteins (SREBPs) such as SREBF1 to their cognate DNA sequences and increases their transcriptional activities. Facilitates binding of TP53 to DNA. May be involved in mitochondrial quality control and autophagy in a transcription-dependent fashion implicating HSPB1. Can modulate the activity of the telomerase complex and may be involved in telomere maintenance. In the cytoplasm proposed to dissociate the BECN1:BCL2 complex via competitive interaction with BECN1 leading to autophagy activation. Can protect BECN1 and ATG5 from calpain-mediated cleavage and thus proposed to control their proautophagic and proapoptotic functions and to regulate the extent and severity of inflammation-associated cellular injury. In myeloid cells has a protective role against endotoxemia and bacterial infection by promoting autophagy. Involved in endosomal translocation and activation of TLR9 in response to CpG-DNA in macrophages. In terms of biological role, in the extracellular compartment (following either active secretion or passive release) involved in regulation of the inflammatory response. Fully reduced HGMB1 (which subsequently gets oxidized after release) in association with CXCL12 mediates the recruitment of inflammatory cells during the initial phase of tissue injury; the CXCL12:HMGB1 complex triggers CXCR4 homodimerization. Induces the migration of monocyte-derived immature dendritic cells and seems to regulate adhesive and migratory functions of neutrophils implicating AGER/RAGE and ITGAM. Can bind to various types of DNA and RNA including microbial unmethylated CpG-DNA to enhance the innate immune response to nucleic acids. Proposed to act in promiscuous DNA/RNA sensing which cooperates with subsequent discriminative sensing by specific pattern recognition receptors. Promotes extracellular DNA-induced AIM2 inflammasome activation implicating AGER/RAGE. Disulfide HMGB1 binds to transmembrane receptors, such as AGER/RAGE, TLR2, TLR4 and probably TREM1, thus activating their signal transduction pathways. Mediates the release of cytokines/chemokines such as TNF, IL-1, IL-6, IL-8, CCL2, CCL3, CCL4 and CXCL10. Promotes secretion of interferon-gamma by macrophage-stimulated natural killer (NK) cells in concert with other cytokines like IL-2 or IL-12. TLR4 is proposed to be the primary receptor promoting macrophage activation and signaling through TLR4 seems to implicate LY96/MD-2. In bacterial LPS- or LTA-mediated inflammatory responses binds to the endotoxins and transfers them to CD14 for signaling to the respective TLR4:LY96 and TLR2 complexes. Contributes to tumor proliferation by association with ACER/RAGE. Can bind to IL1-beta and signals through the IL1R1:IL1RAP receptor complex. Binding to class A CpG activates cytokine production in plasmacytoid dendritic cells implicating TLR9, MYD88 and AGER/RAGE and can activate autoreactive B cells. Via HMGB1-containing chromatin immune complexes may also promote B cell responses to endogenous TLR9 ligands through a B-cell receptor (BCR)-dependent and ACER/RAGE-independent mechanism. Inhibits phagocytosis of apoptotic cells by macrophages; the function is dependent on poly-ADP-ribosylation and involves binding to phosphatidylserine on the cell surface of apoptotic cells. In adaptive immunity may be involved in enhancing immunity through activation of effector T-cells and suppression of regulatory T (TReg) cells. In contrast, without implicating effector or regulatory T-cells, required for tumor infiltration and activation of T-cells expressing the lymphotoxin LTA:LTB heterotrimer thus promoting tumor malignant progression. Also reported to limit proliferation of T-cells. Released HMGB1:nucleosome complexes formed during apoptosis can signal through TLR2 to induce cytokine production. Involved in induction of immunological tolerance by apoptotic cells; its pro-inflammatory activities when released by apoptotic cells are neutralized by reactive oxygen species (ROS)-dependent oxidation specifically on Cys-106. During macrophage activation by activated lymphocyte-derived self apoptotic DNA (ALD-DNA) promotes recruitment of ALD-DNA to endosomes. The sequence is that of High mobility group protein B1 (HMGB1) from Canis lupus familiaris (Dog).